A 635-amino-acid chain; its full sequence is 1-deoxy-D-xylulose-5-phosphate synthase (635 aa).

Thiamine diphosphate is bound by residues His-78 and Gly-119–Ser-121. Asp-151 provides a ligand contact to Mg(2+). Thiamine diphosphate-binding positions include Gly-152–Ala-153, Asn-180, Tyr-289, and Glu-371. Asn-180 contributes to the Mg(2+) binding site.

The protein belongs to the transketolase family. DXPS subfamily. As to quaternary structure, homodimer. It depends on Mg(2+) as a cofactor. The cofactor is thiamine diphosphate.

The catalysed reaction is D-glyceraldehyde 3-phosphate + pyruvate + H(+) = 1-deoxy-D-xylulose 5-phosphate + CO2. It participates in metabolic intermediate biosynthesis; 1-deoxy-D-xylulose 5-phosphate biosynthesis; 1-deoxy-D-xylulose 5-phosphate from D-glyceraldehyde 3-phosphate and pyruvate: step 1/1. Its function is as follows. Catalyzes the acyloin condensation reaction between C atoms 2 and 3 of pyruvate and glyceraldehyde 3-phosphate to yield 1-deoxy-D-xylulose-5-phosphate (DXP). In Bartonella tribocorum (strain CIP 105476 / IBS 506), this protein is 1-deoxy-D-xylulose-5-phosphate synthase.